We begin with the raw amino-acid sequence, 202 residues long: LexA repressor 1 (202 aa).

Positions 28 to 48 form a DNA-binding region, H-T-H motif; the sequence is RAEIAQELGFKSPNAAEEHLK. Residues serine 123 and lysine 160 each act as for autocatalytic cleavage activity in the active site.

This sequence belongs to the peptidase S24 family. In terms of assembly, homodimer.

It carries out the reaction Hydrolysis of Ala-|-Gly bond in repressor LexA.. Functionally, represses a number of genes involved in the response to DNA damage (SOS response), including recA and lexA. In the presence of single-stranded DNA, RecA interacts with LexA causing an autocatalytic cleavage which disrupts the DNA-binding part of LexA, leading to derepression of the SOS regulon and eventually DNA repair. This Pseudomonas syringae pv. tomato (strain ATCC BAA-871 / DC3000) protein is LexA repressor 1.